A 432-amino-acid chain; its full sequence is Serine--tRNA ligase (432 aa).

235–237 (TSE) lines the L-serine pocket. Position 266–268 (266–268 (RSE)) interacts with ATP. E289 provides a ligand contact to L-serine. 353-356 (EISS) serves as a coordination point for ATP. S388 is an L-serine binding site.

This sequence belongs to the class-II aminoacyl-tRNA synthetase family. Type-1 seryl-tRNA synthetase subfamily. In terms of assembly, homodimer. The tRNA molecule binds across the dimer.

The protein resides in the cytoplasm. The enzyme catalyses tRNA(Ser) + L-serine + ATP = L-seryl-tRNA(Ser) + AMP + diphosphate + H(+). It carries out the reaction tRNA(Sec) + L-serine + ATP = L-seryl-tRNA(Sec) + AMP + diphosphate + H(+). The protein operates within aminoacyl-tRNA biosynthesis; selenocysteinyl-tRNA(Sec) biosynthesis; L-seryl-tRNA(Sec) from L-serine and tRNA(Sec): step 1/1. In terms of biological role, catalyzes the attachment of serine to tRNA(Ser). Is also able to aminoacylate tRNA(Sec) with serine, to form the misacylated tRNA L-seryl-tRNA(Sec), which will be further converted into selenocysteinyl-tRNA(Sec). This is Serine--tRNA ligase from Paraburkholderia phymatum (strain DSM 17167 / CIP 108236 / LMG 21445 / STM815) (Burkholderia phymatum).